A 304-amino-acid polypeptide reads, in one-letter code: Acetyl-coenzyme A carboxylase carboxyl transferase subunit beta (304 aa).

The interval 16–42 is disordered; that stretch reads SSLPPKNSEGGLAYFDEPSPEQESTRK. The CoA carboxyltransferase N-terminal domain maps to 48 to 304; that stretch reads LWVKCPKCGE…LLRYHQEGAV (257 aa). Zn(2+) contacts are provided by Cys52, Cys55, Cys71, and Cys74. A C4-type zinc finger spans residues 52–74; it reads CPKCGEALFNKDLVENQRVCLTC.

It belongs to the AccD/PCCB family. As to quaternary structure, acetyl-CoA carboxylase is a heterohexamer composed of biotin carboxyl carrier protein (AccB), biotin carboxylase (AccC) and two subunits each of ACCase subunit alpha (AccA) and ACCase subunit beta (AccD). It depends on Zn(2+) as a cofactor.

The protein resides in the cytoplasm. It catalyses the reaction N(6)-carboxybiotinyl-L-lysyl-[protein] + acetyl-CoA = N(6)-biotinyl-L-lysyl-[protein] + malonyl-CoA. The protein operates within lipid metabolism; malonyl-CoA biosynthesis; malonyl-CoA from acetyl-CoA: step 1/1. Component of the acetyl coenzyme A carboxylase (ACC) complex. Biotin carboxylase (BC) catalyzes the carboxylation of biotin on its carrier protein (BCCP) and then the CO(2) group is transferred by the transcarboxylase to acetyl-CoA to form malonyl-CoA. The polypeptide is Acetyl-coenzyme A carboxylase carboxyl transferase subunit beta (Desulfitobacterium hafniense (strain Y51)).